A 459-amino-acid chain; its full sequence is Siroheme synthase (459 aa).

Residues 1–204 (MDHLPIFCQL…ADEKAVNATT (204 aa)) are precorrin-2 dehydrogenase /sirohydrochlorin ferrochelatase. NAD(+)-binding positions include 22 to 23 (DV) and 43 to 44 (LT). Phosphoserine is present on serine 128. Residues 216–459 (GEVVLVGAGP…KLNWFSNYYD (244 aa)) are uroporphyrinogen-III C-methyltransferase. An S-adenosyl-L-methionine-binding site is contributed by proline 225. Aspartate 248 serves as the catalytic Proton acceptor. Lysine 270 (proton donor) is an active-site residue. Residues 301 to 303 (GGD), isoleucine 306, 331 to 332 (TA), methionine 382, and glycine 411 each bind S-adenosyl-L-methionine.

It in the N-terminal section; belongs to the precorrin-2 dehydrogenase / sirohydrochlorin ferrochelatase family. This sequence in the C-terminal section; belongs to the precorrin methyltransferase family.

It catalyses the reaction uroporphyrinogen III + 2 S-adenosyl-L-methionine = precorrin-2 + 2 S-adenosyl-L-homocysteine + H(+). It carries out the reaction precorrin-2 + NAD(+) = sirohydrochlorin + NADH + 2 H(+). The enzyme catalyses siroheme + 2 H(+) = sirohydrochlorin + Fe(2+). It participates in cofactor biosynthesis; adenosylcobalamin biosynthesis; precorrin-2 from uroporphyrinogen III: step 1/1. Its pathway is cofactor biosynthesis; adenosylcobalamin biosynthesis; sirohydrochlorin from precorrin-2: step 1/1. The protein operates within porphyrin-containing compound metabolism; siroheme biosynthesis; precorrin-2 from uroporphyrinogen III: step 1/1. It functions in the pathway porphyrin-containing compound metabolism; siroheme biosynthesis; siroheme from sirohydrochlorin: step 1/1. It participates in porphyrin-containing compound metabolism; siroheme biosynthesis; sirohydrochlorin from precorrin-2: step 1/1. Functionally, multifunctional enzyme that catalyzes the SAM-dependent methylations of uroporphyrinogen III at position C-2 and C-7 to form precorrin-2 via precorrin-1. Then it catalyzes the NAD-dependent ring dehydrogenation of precorrin-2 to yield sirohydrochlorin. Finally, it catalyzes the ferrochelation of sirohydrochlorin to yield siroheme. The protein is Siroheme synthase of Salmonella agona (strain SL483).